A 120-amino-acid polypeptide reads, in one-letter code: Glycine cleavage system H protein (120 aa).

Residues 17 to 99 (IATVGITAHA…RGAGWFFKLK (83 aa)) form the Lipoyl-binding domain. An N6-lipoyllysine modification is found at lysine 58.

It belongs to the GcvH family. In terms of assembly, the glycine cleavage system is composed of four proteins: P, T, L and H. (R)-lipoate is required as a cofactor.

The glycine cleavage system catalyzes the degradation of glycine. The H protein shuttles the methylamine group of glycine from the P protein to the T protein. In Allorhizobium ampelinum (strain ATCC BAA-846 / DSM 112012 / S4) (Agrobacterium vitis (strain S4)), this protein is Glycine cleavage system H protein.